A 333-amino-acid chain; its full sequence is S-adenosylmethionine decarboxylase proenzyme (333 aa).

Phe-7 contributes to the substrate binding site. Residues Glu-8 and Glu-11 contribute to the active site. Glu-67 is a binding site for substrate. Residue Ser-68 is the Schiff-base intermediate with substrate; via pyruvic acid of the active site. Ser-68 carries the post-translational modification Pyruvic acid (Ser); by autocatalysis. Residue Cys-82 is the Proton donor; for catalytic activity of the active site. Residue Phe-223 participates in substrate binding. Residues Ser-229 and His-243 each act as proton acceptor; for processing activity in the active site. Substrate is bound at residue Glu-247. At Ser-298 the chain carries Phosphoserine.

The protein belongs to the eukaryotic AdoMetDC family. Heterotetramer of two alpha and two beta chains. It depends on pyruvate as a cofactor. Post-translationally, is synthesized initially as an inactive proenzyme. Formation of the active enzyme involves a self-maturation process in which the active site pyruvoyl group is generated from an internal serine residue via an autocatalytic post-translational modification. Two non-identical subunits are generated from the proenzyme in this reaction, and the pyruvate is formed at the N-terminus of the alpha chain, which is derived from the carboxyl end of the proenzyme. The post-translation cleavage follows an unusual pathway, termed non-hydrolytic serinolysis, in which the side chain hydroxyl group of the serine supplies its oxygen atom to form the C-terminus of the beta chain, while the remainder of the serine residue undergoes an oxidative deamination to produce ammonia and the pyruvoyl group blocking the N-terminus of the alpha chain.

The catalysed reaction is S-adenosyl-L-methionine + H(+) = S-adenosyl 3-(methylsulfanyl)propylamine + CO2. It functions in the pathway amine and polyamine biosynthesis; S-adenosylmethioninamine biosynthesis; S-adenosylmethioninamine from S-adenosyl-L-methionine: step 1/1. In terms of biological role, essential for biosynthesis of the polyamines spermidine and spermine. Promotes maintenance and self-renewal of embryonic stem cells, by maintaining spermine levels. The polypeptide is S-adenosylmethionine decarboxylase proenzyme (Amd1) (Rattus norvegicus (Rat)).